The following is a 292-amino-acid chain: 4-hydroxy-tetrahydrodipicolinate synthase (292 aa).

Thr44 serves as a coordination point for pyruvate. Tyr132 serves as the catalytic Proton donor/acceptor. Lys161 acts as the Schiff-base intermediate with substrate in catalysis. Ile203 is a pyruvate binding site.

The protein belongs to the DapA family. As to quaternary structure, homotetramer.

It localises to the cytoplasm. It carries out the reaction L-aspartate 4-semialdehyde + pyruvate = (2S,4S)-4-hydroxy-2,3,4,5-tetrahydrodipicolinate + H2O + H(+). The protein operates within amino-acid biosynthesis; L-lysine biosynthesis via DAP pathway; (S)-tetrahydrodipicolinate from L-aspartate: step 3/4. With respect to regulation, is feedback inhibited by lysine. Is competitively inhibited by 2-oxobutyrate with respect to pyruvate. In terms of biological role, catalyzes the condensation of (S)-aspartate-beta-semialdehyde [(S)-ASA] and pyruvate to 4-hydroxy-tetrahydrodipicolinate (HTPA). The polypeptide is 4-hydroxy-tetrahydrodipicolinate synthase (Rhizobium meliloti (Ensifer meliloti)).